Consider the following 442-residue polypeptide: 4-hydroxyphenylpyruvate dioxygenase (442 aa).

VOC domains follow at residues 45-200 and 216-376; these read RFHH…GFEA and RLDH…IFTK. Fe cation is bound by residues His-219, His-301, and Glu-387.

The protein belongs to the 4HPPD family. Fe cation is required as a cofactor.

The protein resides in the cytoplasm. It carries out the reaction 3-(4-hydroxyphenyl)pyruvate + O2 = homogentisate + CO2. It participates in amino-acid degradation; L-phenylalanine degradation; acetoacetate and fumarate from L-phenylalanine: step 3/6. Its pathway is cofactor biosynthesis; prenylquinone biosynthesis. This Daucus carota (Wild carrot) protein is 4-hydroxyphenylpyruvate dioxygenase.